A 373-amino-acid polypeptide reads, in one-letter code: Centrosomal protein of 41 kDa (373 aa).

A disordered region spans residues 91–137; the sequence is LEDNDSATSEADAEIAAKTNGKGSPEEQSPSPVQFINSTGAGDSSRS. A phosphoserine mark is found at Ser96 and Ser99. Residue Thr109 is modified to Phosphothreonine. Phosphoserine occurs at positions 114 and 121. Polar residues predominate over residues 116–137; that stretch reads EEQSPSPVQFINSTGAGDSSRS. A Rhodanese domain is found at 169–266; it reads PDCPFLLLDV…LAQKFPEGLV (98 aa). Positions 317-373 are disordered; it reads DQGPADNPSRLNQNNSAGKDSKVAACRGGQNLPTSCPASHSSPRTLTSGHLQGKPWK. The segment covering 325-334 has biased composition (polar residues); the sequence is SRLNQNNSAG. Arg343 is modified (omega-N-methylarginine). Polar residues predominate over residues 347–366; that stretch reads NLPTSCPASHSSPRTLTSGH.

The protein belongs to the CEP41 family. As to quaternary structure, found in a complex with TTLL6.

It localises to the cytoplasm. Its subcellular location is the cytoskeleton. It is found in the microtubule organizing center. The protein localises to the centrosome. The protein resides in the cell projection. It localises to the cilium. Its subcellular location is the cilium basal body. In terms of biological role, required during ciliogenesis for tubulin glutamylation in cilium. Probably acts by participating in the transport of TTLL6, a tubulin polyglutamylase, between the basal body and the cilium. The chain is Centrosomal protein of 41 kDa (Cep41) from Mus musculus (Mouse).